The primary structure comprises 486 residues: Histidine--tRNA ligase, chloroplastic/mitochondrial (486 aa).

The protein belongs to the class-II aminoacyl-tRNA synthetase family.

The protein resides in the plastid. It is found in the chloroplast. The protein localises to the mitochondrion. It catalyses the reaction tRNA(His) + L-histidine + ATP = L-histidyl-tRNA(His) + AMP + diphosphate + H(+). This Arabidopsis thaliana (Mouse-ear cress) protein is Histidine--tRNA ligase, chloroplastic/mitochondrial.